Consider the following 254-residue polypeptide: Distal membrane-arm assembly complex protein 2 (254 aa).

Ser-250 carries the phosphoserine modification.

The protein belongs to the ATP synthase subunit s family. As to quaternary structure, interacts with incompletely assembled mitochondrial NADH:ubiquinone oxidoreductase complex (complex I).

The protein localises to the mitochondrion. Required for the assembly of the mitochondrial NADH:ubiquinone oxidoreductase complex (complex I). Involved in the assembly of the distal region of complex I. The protein is Distal membrane-arm assembly complex protein 2 of Rattus norvegicus (Rat).